A 199-amino-acid chain; its full sequence is NAD(P)H dehydrogenase (quinone) (199 aa).

The Flavodoxin-like domain occupies 4–190 (VLVLYYSAYG…DGARYQGRKI (187 aa)). Residues 10 to 15 (SAYGHI) and 78 to 80 (TRF) contribute to the FMN site. An NAD(+)-binding site is contributed by Tyr-12. Trp-98 serves as a coordination point for substrate. FMN-binding positions include 113-119 (STATQHG) and His-134.

This sequence belongs to the WrbA family. The cofactor is FMN.

It catalyses the reaction a quinone + NADH + H(+) = a quinol + NAD(+). The enzyme catalyses a quinone + NADPH + H(+) = a quinol + NADP(+). The polypeptide is NAD(P)H dehydrogenase (quinone) (Xanthobacter autotrophicus (strain ATCC BAA-1158 / Py2)).